The sequence spans 73 residues: Cell division protein ZapB (73 aa).

The stretch at 3-66 (LELLSQLETK…SWSDKVNGLV (64 aa)) forms a coiled coil.

This sequence belongs to the ZapB family. Homodimer. The ends of the coiled-coil dimer bind to each other, forming polymers. Interacts with FtsZ.

It localises to the cytoplasm. In terms of biological role, non-essential, abundant cell division factor that is required for proper Z-ring formation. It is recruited early to the divisome by direct interaction with FtsZ, stimulating Z-ring assembly and thereby promoting cell division earlier in the cell cycle. Its recruitment to the Z-ring requires functional FtsA or ZipA. In Shewanella frigidimarina (strain NCIMB 400), this protein is Cell division protein ZapB.